The following is a 407-amino-acid chain: Carbamoyl phosphate synthase small chain (407 aa).

Positions 1 to 205 (MTETTSKTAP…LADGYGEQDT (205 aa)) are CPSase. S60, G257, and G259 together coordinate L-glutamine. The 189-residue stretch at 209 to 397 (HVVALDFGVK…INLIREKKGE (189 aa)) folds into the Glutamine amidotransferase type-1 domain. C286 (nucleophile) is an active-site residue. The L-glutamine site is built by L287, Q290, N328, G330, and F331. Active-site residues include H370 and E372.

It belongs to the CarA family. Composed of two chains; the small (or glutamine) chain promotes the hydrolysis of glutamine to ammonia, which is used by the large (or ammonia) chain to synthesize carbamoyl phosphate. Tetramer of heterodimers (alpha,beta)4.

The enzyme catalyses hydrogencarbonate + L-glutamine + 2 ATP + H2O = carbamoyl phosphate + L-glutamate + 2 ADP + phosphate + 2 H(+). The catalysed reaction is L-glutamine + H2O = L-glutamate + NH4(+). It functions in the pathway amino-acid biosynthesis; L-arginine biosynthesis; carbamoyl phosphate from bicarbonate: step 1/1. The protein operates within pyrimidine metabolism; UMP biosynthesis via de novo pathway; (S)-dihydroorotate from bicarbonate: step 1/3. Small subunit of the glutamine-dependent carbamoyl phosphate synthetase (CPSase). CPSase catalyzes the formation of carbamoyl phosphate from the ammonia moiety of glutamine, carbonate, and phosphate donated by ATP, constituting the first step of 2 biosynthetic pathways, one leading to arginine and/or urea and the other to pyrimidine nucleotides. The small subunit (glutamine amidotransferase) binds and cleaves glutamine to supply the large subunit with the substrate ammonia. This chain is Carbamoyl phosphate synthase small chain, found in Brucella anthropi (strain ATCC 49188 / DSM 6882 / CCUG 24695 / JCM 21032 / LMG 3331 / NBRC 15819 / NCTC 12168 / Alc 37) (Ochrobactrum anthropi).